The primary structure comprises 447 residues: N-succinylarginine dihydrolase (447 aa).

Residues 19 to 28, Asn110, and 137 to 138 each bind substrate; these read AGLSFGNEAS and HR. Glu174 is an active-site residue. Arg212 serves as a coordination point for substrate. His248 is an active-site residue. Residues Asp250 and Asn359 each contribute to the substrate site. Cys365 (nucleophile) is an active-site residue.

It belongs to the succinylarginine dihydrolase family. As to quaternary structure, homodimer.

The catalysed reaction is N(2)-succinyl-L-arginine + 2 H2O + 2 H(+) = N(2)-succinyl-L-ornithine + 2 NH4(+) + CO2. Its pathway is amino-acid degradation; L-arginine degradation via AST pathway; L-glutamate and succinate from L-arginine: step 2/5. Functionally, catalyzes the hydrolysis of N(2)-succinylarginine into N(2)-succinylornithine, ammonia and CO(2). The polypeptide is N-succinylarginine dihydrolase (Salmonella heidelberg (strain SL476)).